Reading from the N-terminus, the 369-residue chain is Glutamate 5-kinase (369 aa).

Position 9 (K9) interacts with ATP. Positions 49, 136, and 148 each coordinate substrate. Residues 168–169 (TD) and 210–216 (TGGMLTK) each bind ATP. In terms of domain architecture, PUA spans 275 to 355 (QGSIWVDKGA…KGVLIYRDDW (81 aa)).

Belongs to the glutamate 5-kinase family.

It is found in the cytoplasm. It carries out the reaction L-glutamate + ATP = L-glutamyl 5-phosphate + ADP. It participates in amino-acid biosynthesis; L-proline biosynthesis; L-glutamate 5-semialdehyde from L-glutamate: step 1/2. Its function is as follows. Catalyzes the transfer of a phosphate group to glutamate to form L-glutamate 5-phosphate. This chain is Glutamate 5-kinase, found in Streptococcus pneumoniae serotype 2 (strain D39 / NCTC 7466).